Here is a 382-residue protein sequence, read N- to C-terminus: Homoserine O-succinyltransferase (382 aa).

The region spanning N51–L359 is the AB hydrolase-1 domain. Residue S157 is the Nucleophile of the active site. R227 contributes to the substrate binding site. Residues D322 and H355 contribute to the active site. D356 provides a ligand contact to substrate.

The protein belongs to the AB hydrolase superfamily. MetX family. As to quaternary structure, homodimer.

The protein localises to the cytoplasm. It carries out the reaction L-homoserine + succinyl-CoA = O-succinyl-L-homoserine + CoA. It functions in the pathway amino-acid biosynthesis; L-methionine biosynthesis via de novo pathway; O-succinyl-L-homoserine from L-homoserine: step 1/1. Transfers a succinyl group from succinyl-CoA to L-homoserine, forming succinyl-L-homoserine. This chain is Homoserine O-succinyltransferase, found in Halorhodospira halophila (strain DSM 244 / SL1) (Ectothiorhodospira halophila (strain DSM 244 / SL1)).